A 265-amino-acid polypeptide reads, in one-letter code: Energy-coupling factor transporter transmembrane protein EcfT (265 aa).

Transmembrane regions (helical) follow at residues Met26–Ala46, Val47–Phe67, Pro72–Ala92, Val107–Met127, Leu152–Met172, and His243–Leu263.

This sequence belongs to the energy-coupling factor EcfT family. Forms a stable energy-coupling factor (ECF) transporter complex composed of 2 membrane-embedded substrate-binding proteins (S component), 2 ATP-binding proteins (A component) and 2 transmembrane proteins (T component). May be able to interact with more than 1 S component at a time.

It is found in the cell membrane. Transmembrane (T) component of an energy-coupling factor (ECF) ABC-transporter complex. Unlike classic ABC transporters this ECF transporter provides the energy necessary to transport a number of different substrates. In Macrococcus caseolyticus (strain JCSC5402) (Macrococcoides caseolyticum), this protein is Energy-coupling factor transporter transmembrane protein EcfT.